A 266-amino-acid polypeptide reads, in one-letter code: Glucosamine-6-phosphate deaminase (266 aa).

Residue Asp-72 is the Proton acceptor; for enolization step of the active site. Asp-141 functions as the For ring-opening step in the catalytic mechanism. The Proton acceptor; for ring-opening step role is filled by His-143. Glu-148 functions as the For ring-opening step in the catalytic mechanism.

This sequence belongs to the glucosamine/galactosamine-6-phosphate isomerase family. NagB subfamily. As to quaternary structure, homohexamer.

It carries out the reaction alpha-D-glucosamine 6-phosphate + H2O = beta-D-fructose 6-phosphate + NH4(+). Its pathway is amino-sugar metabolism; N-acetylneuraminate degradation; D-fructose 6-phosphate from N-acetylneuraminate: step 5/5. Its activity is regulated as follows. Allosterically activated by N-acetylglucosamine 6-phosphate (GlcNAc6P). In terms of biological role, catalyzes the reversible isomerization-deamination of glucosamine 6-phosphate (GlcN6P) to form fructose 6-phosphate (Fru6P) and ammonium ion. The chain is Glucosamine-6-phosphate deaminase from Vibrio campbellii (strain ATCC BAA-1116).